The following is a 577-amino-acid chain: Proline--tRNA ligase (577 aa).

The protein belongs to the class-II aminoacyl-tRNA synthetase family. ProS type 1 subfamily. In terms of assembly, homodimer.

It is found in the cytoplasm. It catalyses the reaction tRNA(Pro) + L-proline + ATP = L-prolyl-tRNA(Pro) + AMP + diphosphate. In terms of biological role, catalyzes the attachment of proline to tRNA(Pro) in a two-step reaction: proline is first activated by ATP to form Pro-AMP and then transferred to the acceptor end of tRNA(Pro). As ProRS can inadvertently accommodate and process non-cognate amino acids such as alanine and cysteine, to avoid such errors it has two additional distinct editing activities against alanine. One activity is designated as 'pretransfer' editing and involves the tRNA(Pro)-independent hydrolysis of activated Ala-AMP. The other activity is designated 'posttransfer' editing and involves deacylation of mischarged Ala-tRNA(Pro). The misacylated Cys-tRNA(Pro) is not edited by ProRS. This chain is Proline--tRNA ligase, found in Helicobacter pylori (strain HPAG1).